We begin with the raw amino-acid sequence, 502 residues long: Cobyric acid synthase (502 aa).

One can recognise a GATase cobBQ-type domain in the interval 260–433 (VLRVAVCAVP…WHGSLESDGF (174 aa)). C341 serves as the catalytic Nucleophile. Residue H425 is part of the active site.

Belongs to the CobB/CobQ family. CobQ subfamily.

The protein operates within cofactor biosynthesis; adenosylcobalamin biosynthesis. Functionally, catalyzes amidations at positions B, D, E, and G on adenosylcobyrinic A,C-diamide. NH(2) groups are provided by glutamine, and one molecule of ATP is hydrogenolyzed for each amidation. In Streptomyces coelicolor (strain ATCC BAA-471 / A3(2) / M145), this protein is Cobyric acid synthase.